A 1136-amino-acid polypeptide reads, in one-letter code: Probable LRR receptor-like serine/threonine-protein kinase At4g36180 (1136 aa).

Positions 1 to 22 (MAMDISLFFIFLVIYAPLVSYA) are cleaved as a signal peptide. The Extracellular segment spans residues 23–751 (DESQAEIDAL…TAEGKKKKRK (729 aa)). 8 LRR repeats span residues 93-115 (MLRK…LAYC), 117-139 (RLLS…MRNL), 141-162 (SLEV…GLPS), 163-186 (SLQF…ANLT), 187-210 (QLQL…GNLQ), 211-233 (SLQY…ISNC), 235-256 (SLVH…AYGA), and 259-280 (KLEV…SLFC). N-linked (GlcNAc...) asparagine glycans are attached at residues N105 and N138. Residues N184, N192, and N232 are each glycosylated (N-linked (GlcNAc...) asparagine). N269 and N281 each carry an N-linked (GlcNAc...) asparagine glycan. LRR repeat units follow at residues 283–304 (SLTI…ETTA), 309–330 (GLQV…WLTN), 333–355 (SLKN…IGNL), 357–379 (RLEE…IKQC), 381–403 (SLDV…LGYM), 405–426 (ALKV…SMVN), 429–452 (QLER…MALT), 453–479 (SLSE…SNLS), 480–500 (FLNL…GNLF), 501–524 (KLTA…SGLP), 525–546 (NVQV…GFSS), 549–571 (SLRY…FGFL), 573–595 (LLVS…IGNC), 597–620 (ALEV…SRLP), 621–643 (RLKV…ISQS), 645–666 (SLNS…SFSG), 669–691 (NLTK…LALI), and 694–716 (NLVY…LGSR). The N-linked (GlcNAc...) asparagine glycan is linked to N365. N-linked (GlcNAc...) asparagine glycans are attached at residues N441, N474, N477, N482, N511, N535, N554, and N594. N-linked (GlcNAc...) asparagine glycosylation is present at N631. N-linked (GlcNAc...) asparagine glycosylation is found at N669, N679, N699, and N719. A helical membrane pass occupies residues 752–772 (MILMIVMAAIGAFLLSLFCCF). Residues 773 to 1136 (YVYTLLKWRK…ADPTSQPSPA (364 aa)) lie on the Cytoplasmic side of the membrane. The interval 786–819 (QQSTTGEKKRSPGRTSAGSRVRSSTSRSSTENGE) is disordered. Positions 799 to 815 (RTSAGSRVRSSTSRSST) are enriched in low complexity. Residues T830 and T838 each carry the phosphothreonine modification. The Protein kinase domain occupies 841–1123 (FDEENVLSRT…LEGCRVGPDV (283 aa)). Y915 and Y1010 each carry phosphotyrosine.

This sequence belongs to the protein kinase superfamily. Ser/Thr protein kinase family.

Its subcellular location is the cell membrane. The enzyme catalyses L-seryl-[protein] + ATP = O-phospho-L-seryl-[protein] + ADP + H(+). It catalyses the reaction L-threonyl-[protein] + ATP = O-phospho-L-threonyl-[protein] + ADP + H(+). The sequence is that of Probable LRR receptor-like serine/threonine-protein kinase At4g36180 from Arabidopsis thaliana (Mouse-ear cress).